We begin with the raw amino-acid sequence, 196 residues long: ATP-dependent Clp protease proteolytic subunit (196 aa).

The active-site Nucleophile is the serine 96. Residue histidine 121 is part of the active site.

It belongs to the peptidase S14 family. Fourteen ClpP subunits assemble into 2 heptameric rings which stack back to back to give a disk-like structure with a central cavity, resembling the structure of eukaryotic proteasomes.

Its subcellular location is the cytoplasm. The catalysed reaction is Hydrolysis of proteins to small peptides in the presence of ATP and magnesium. alpha-casein is the usual test substrate. In the absence of ATP, only oligopeptides shorter than five residues are hydrolyzed (such as succinyl-Leu-Tyr-|-NHMec, and Leu-Tyr-Leu-|-Tyr-Trp, in which cleavage of the -Tyr-|-Leu- and -Tyr-|-Trp bonds also occurs).. In terms of biological role, cleaves peptides in various proteins in a process that requires ATP hydrolysis. Has a chymotrypsin-like activity. Plays a major role in the degradation of misfolded proteins. In Streptococcus equi subsp. zooepidemicus (strain H70), this protein is ATP-dependent Clp protease proteolytic subunit.